A 249-amino-acid polypeptide reads, in one-letter code: Phosphate import ATP-binding protein PstB (249 aa).

The ABC transporter domain occupies I3–I244. Residue G35–S42 participates in ATP binding.

The protein belongs to the ABC transporter superfamily. Phosphate importer (TC 3.A.1.7) family. In terms of assembly, the complex is composed of two ATP-binding proteins (PstB), two transmembrane proteins (PstC and PstA) and a solute-binding protein (PstS).

The protein resides in the cell inner membrane. The enzyme catalyses phosphate(out) + ATP + H2O = ADP + 2 phosphate(in) + H(+). In terms of biological role, part of the ABC transporter complex PstSACB involved in phosphate import. Responsible for energy coupling to the transport system. The sequence is that of Phosphate import ATP-binding protein PstB from Cytophaga hutchinsonii (strain ATCC 33406 / DSM 1761 / CIP 103989 / NBRC 15051 / NCIMB 9469 / D465).